The following is a 440-amino-acid chain: Enolase 1 (440 aa).

Substrate is bound by residues His161 and Glu170. Glu213 acts as the Proton donor in catalysis. Mg(2+)-binding residues include Asp248, Glu297, and Asp324. Glu297 and Asp324 together coordinate substrate. The active-site Proton acceptor is the Lys349. Substrate-binding positions include 376–379 (SHRS) and Lys400.

Belongs to the enolase family. In terms of assembly, homodimer. The cofactor is Mg(2+).

The protein localises to the cytoplasm. It catalyses the reaction (2R)-2-phosphoglycerate = phosphoenolpyruvate + H2O. It functions in the pathway carbohydrate degradation; glycolysis; pyruvate from D-glyceraldehyde 3-phosphate: step 4/5. The sequence is that of Enolase 1 (ENO1) from Candida albicans (strain SC5314 / ATCC MYA-2876) (Yeast).